The chain runs to 236 residues: CDP-diacylglycerol--glycerol-3-phosphate 3-phosphatidyltransferase (236 aa).

5 helical membrane-spanning segments follow: residues 39–59, 66–86, 120–140, 163–183, and 196–216; these read IFIALPTIIFIALDNQLGVLA, ISISLQISLLIGGFLFLTAVI, VLIALAINGYFHFSLLIVFIV, WLGKWKTIMQMVGIVFSCFVW, and GLFFWLLTQLPYYLAAVFSIW.

This sequence belongs to the CDP-alcohol phosphatidyltransferase class-I family.

It localises to the cell membrane. The enzyme catalyses a CDP-1,2-diacyl-sn-glycerol + sn-glycerol 3-phosphate = a 1,2-diacyl-sn-glycero-3-phospho-(1'-sn-glycero-3'-phosphate) + CMP + H(+). It functions in the pathway phospholipid metabolism; phosphatidylglycerol biosynthesis; phosphatidylglycerol from CDP-diacylglycerol: step 1/2. In terms of biological role, this protein catalyzes the committed step to the synthesis of the acidic phospholipids. The sequence is that of CDP-diacylglycerol--glycerol-3-phosphate 3-phosphatidyltransferase (pgsA) from Mycoplasma genitalium (strain ATCC 33530 / DSM 19775 / NCTC 10195 / G37) (Mycoplasmoides genitalium).